Here is a 143-residue protein sequence, read N- to C-terminus: Nucleoside diphosphate kinase (143 aa).

The ATP site is built by K11, F59, R87, T93, R104, and N114. H117 (pros-phosphohistidine intermediate) is an active-site residue.

This sequence belongs to the NDK family. As to quaternary structure, homotetramer. It depends on Mg(2+) as a cofactor.

It localises to the cytoplasm. It catalyses the reaction a 2'-deoxyribonucleoside 5'-diphosphate + ATP = a 2'-deoxyribonucleoside 5'-triphosphate + ADP. The enzyme catalyses a ribonucleoside 5'-diphosphate + ATP = a ribonucleoside 5'-triphosphate + ADP. In terms of biological role, major role in the synthesis of nucleoside triphosphates other than ATP. The ATP gamma phosphate is transferred to the NDP beta phosphate via a ping-pong mechanism, using a phosphorylated active-site intermediate. The sequence is that of Nucleoside diphosphate kinase from Pseudoalteromonas translucida (strain TAC 125).